Consider the following 287-residue polypeptide: ATP synthase gamma chain (287 aa).

This sequence belongs to the ATPase gamma chain family. As to quaternary structure, F-type ATPases have 2 components, CF(1) - the catalytic core - and CF(0) - the membrane proton channel. CF(1) has five subunits: alpha(3), beta(3), gamma(1), delta(1), epsilon(1). CF(0) has three main subunits: a, b and c.

Its subcellular location is the cell inner membrane. Produces ATP from ADP in the presence of a proton gradient across the membrane. The gamma chain is believed to be important in regulating ATPase activity and the flow of protons through the CF(0) complex. This is ATP synthase gamma chain from Baumannia cicadellinicola subsp. Homalodisca coagulata.